Here is a 291-residue protein sequence, read N- to C-terminus: Tyrosine-protein kinase PtkA (291 aa).

The tract at residues 1 to 79 (MSSPRERRPA…RRASSPGESP (79 aa)) is disordered. A compositionally biased stretch (polar residues) spans 23-60 (HQTSRSSPDTTAPTGSGLSNRFVNDNGIVTDTTASGTN). Residue Tyr262 is modified to Phosphotyrosine.

It belongs to the HAD-like hydrolase superfamily. CbbY/CbbZ/Gph/YieH family. As to quaternary structure, interacts with PtpA. Post-translationally, autophosphorylated.

The catalysed reaction is L-tyrosyl-[protein] + ATP = O-phospho-L-tyrosyl-[protein] + ADP + H(+). Functionally, required for growth within macrophages. Catalyzes the phosphorylation of PtpA on the tyrosine residues at positions 128 and 129, thereby increasing PtpA phosphatase activity and promoting pathogenicity. The polypeptide is Tyrosine-protein kinase PtkA (Mycobacterium bovis (strain ATCC BAA-935 / AF2122/97)).